The primary structure comprises 420 residues: Odorant receptor 63a (420 aa).

Residues 1–43 (MYSPEEAAELKRRNYRSIREMIRLSYTVGFNLLDPSRCGQVLR) lie on the Cytoplasmic side of the membrane. The helical transmembrane segment at 44-64 (IWTIVLSVSSLASLYGHWQML) threads the bilayer. The Extracellular portion of the chain corresponds to 65–76 (ARYIHDIPRIGE). Residues 77–97 (TAGTALQFLTSIAKMWYFLFA) form a helical membrane-spanning segment. The Cytoplasmic portion of the chain corresponds to 98-150 (HRQIYELLRKARCHELLQKCELFERMSDLPVIKEIRQQVESTMNRYWASTRRQ). Residues 151 to 171 (ILIYLYSCICITTNYFINSFV) traverse the membrane as a helical segment. At 172–217 (INLYRYFTKPKGSYDIMLPLPSLYPAWEHKGLEFPYYHIQMYLETC) the chain is on the extracellular side. A helical membrane pass occupies residues 218–238 (SLYICGMCAVSFDGVFIVLCL). The Cytoplasmic segment spans residues 239-296 (HSVGLMRSLNQMVEQATSELVPPDRRVEYLRCCIYQYQRVANFATEVNNCFRHITFTQ). A helical membrane pass occupies residues 297–317 (FLLSLFNWGLALFQMSVGLGN). Residue N318 is glycosylated (N-linked (GlcNAc...) asparagine). The Extracellular portion of the chain corresponds to 318–320 (NSS). Residues 321 to 341 (ITMIRMTMYLVAAGYQIVVYC) form a helical membrane-spanning segment. The Cytoplasmic segment spans residues 342–387 (YNGQRFATASEEIANAFYQVRWYGESREFRHLIRMMLMRTNRGFRL). The chain crosses the membrane as a helical span at residues 388–408 (DVSWFMQMSLPTLMAMVRTSG). The Extracellular segment spans residues 409–420 (QYFLLLQNVNQK).

It belongs to the insect chemoreceptor superfamily. Heteromeric odorant receptor channel (TC 1.A.69) family. Or63a subfamily. Interacts with Orco. Complexes exist early in the endomembrane system in olfactory sensory neurons (OSNs), coupling these complexes to the conserved ciliary trafficking pathway.

It localises to the cell membrane. Odorant receptor which mediates acceptance or avoidance behavior, depending on its substrates. The odorant receptor repertoire encodes a large collection of odor stimuli that vary widely in identity, intensity, and duration. May form a complex with Orco to form odorant-sensing units, providing sensitive and prolonged odorant signaling and calcium permeability. Involved in the behavioral responses to butyl acetate, isoamyl acetate, and hexanoic acid. The polypeptide is Odorant receptor 63a (Or63a) (Drosophila melanogaster (Fruit fly)).